Here is a 271-residue protein sequence, read N- to C-terminus: Putative pyruvate, phosphate dikinase regulatory protein 2 (271 aa).

G151–T158 is an ADP binding site.

It belongs to the pyruvate, phosphate/water dikinase regulatory protein family. PDRP subfamily.

It catalyses the reaction N(tele)-phospho-L-histidyl/L-threonyl-[pyruvate, phosphate dikinase] + ADP = N(tele)-phospho-L-histidyl/O-phospho-L-threonyl-[pyruvate, phosphate dikinase] + AMP + H(+). It carries out the reaction N(tele)-phospho-L-histidyl/O-phospho-L-threonyl-[pyruvate, phosphate dikinase] + phosphate + H(+) = N(tele)-phospho-L-histidyl/L-threonyl-[pyruvate, phosphate dikinase] + diphosphate. Its function is as follows. Bifunctional serine/threonine kinase and phosphorylase involved in the regulation of the pyruvate, phosphate dikinase (PPDK) by catalyzing its phosphorylation/dephosphorylation. The polypeptide is Putative pyruvate, phosphate dikinase regulatory protein 2 (Staphylococcus haemolyticus (strain JCSC1435)).